Here is a 424-residue protein sequence, read N- to C-terminus: Serine--tRNA ligase (424 aa).

Thr230–Glu232 serves as a coordination point for L-serine. Position 261–263 (Arg261–Glu263) interacts with ATP. Position 284 (Glu284) interacts with L-serine. Glu348–Ser351 contacts ATP. Ser384 provides a ligand contact to L-serine.

Belongs to the class-II aminoacyl-tRNA synthetase family. Type-1 seryl-tRNA synthetase subfamily. In terms of assembly, homodimer. The tRNA molecule binds across the dimer.

The protein resides in the cytoplasm. The enzyme catalyses tRNA(Ser) + L-serine + ATP = L-seryl-tRNA(Ser) + AMP + diphosphate + H(+). It catalyses the reaction tRNA(Sec) + L-serine + ATP = L-seryl-tRNA(Sec) + AMP + diphosphate + H(+). The protein operates within aminoacyl-tRNA biosynthesis; selenocysteinyl-tRNA(Sec) biosynthesis; L-seryl-tRNA(Sec) from L-serine and tRNA(Sec): step 1/1. Catalyzes the attachment of serine to tRNA(Ser). Is also able to aminoacylate tRNA(Sec) with serine, to form the misacylated tRNA L-seryl-tRNA(Sec), which will be further converted into selenocysteinyl-tRNA(Sec). This Streptococcus pneumoniae serotype 19F (strain G54) protein is Serine--tRNA ligase.